Here is a 455-residue protein sequence, read N- to C-terminus: Bifunctional protein GlmU (455 aa).

A pyrophosphorylase region spans residues 1-226; sequence MSLDIVILAA…AMEVQGANDR (226 aa). Residues 8 to 11, Lys-22, Gln-73, 78 to 79, 99 to 101, Gly-136, Glu-151, Asn-166, and Asn-224 each bind UDP-N-acetyl-alpha-D-glucosamine; these read LAAG, GT, and YGD. Asp-101 serves as a coordination point for Mg(2+). Asn-224 serves as a coordination point for Mg(2+). The tract at residues 227-247 is linker; that stretch reads KQLSELERHYQLREARRLMAA. An N-acetyltransferase region spans residues 248-455; it reads GVTLRDPSRF…WKRPVKITKD (208 aa). 2 residues coordinate UDP-N-acetyl-alpha-D-glucosamine: Arg-330 and Lys-348. The active-site Proton acceptor is His-360. Residues Tyr-363 and Asn-374 each coordinate UDP-N-acetyl-alpha-D-glucosamine. Acetyl-CoA-binding positions include Ala-377, 383-384, Ser-402, Ala-420, and Arg-437; that span reads NY.

The protein in the N-terminal section; belongs to the N-acetylglucosamine-1-phosphate uridyltransferase family. This sequence in the C-terminal section; belongs to the transferase hexapeptide repeat family. As to quaternary structure, homotrimer. Mg(2+) is required as a cofactor.

Its subcellular location is the cytoplasm. It carries out the reaction alpha-D-glucosamine 1-phosphate + acetyl-CoA = N-acetyl-alpha-D-glucosamine 1-phosphate + CoA + H(+). The catalysed reaction is N-acetyl-alpha-D-glucosamine 1-phosphate + UTP + H(+) = UDP-N-acetyl-alpha-D-glucosamine + diphosphate. The protein operates within nucleotide-sugar biosynthesis; UDP-N-acetyl-alpha-D-glucosamine biosynthesis; N-acetyl-alpha-D-glucosamine 1-phosphate from alpha-D-glucosamine 6-phosphate (route II): step 2/2. It functions in the pathway nucleotide-sugar biosynthesis; UDP-N-acetyl-alpha-D-glucosamine biosynthesis; UDP-N-acetyl-alpha-D-glucosamine from N-acetyl-alpha-D-glucosamine 1-phosphate: step 1/1. Its pathway is bacterial outer membrane biogenesis; LPS lipid A biosynthesis. Catalyzes the last two sequential reactions in the de novo biosynthetic pathway for UDP-N-acetylglucosamine (UDP-GlcNAc). The C-terminal domain catalyzes the transfer of acetyl group from acetyl coenzyme A to glucosamine-1-phosphate (GlcN-1-P) to produce N-acetylglucosamine-1-phosphate (GlcNAc-1-P), which is converted into UDP-GlcNAc by the transfer of uridine 5-monophosphate (from uridine 5-triphosphate), a reaction catalyzed by the N-terminal domain. This Pseudomonas syringae pv. tomato (strain ATCC BAA-871 / DC3000) protein is Bifunctional protein GlmU.